We begin with the raw amino-acid sequence, 352 residues long: MLEQLSYLHGVPAAKGILKAEASDFVVVEDLGFEPCGEGEHIFVRVRKTGENTAWVAGLLADAAGVNRNAVTWAGLKDRHAVTEQWFGIHLPGKAEPDLSVVESDSIQILQARRHNRKLRVGYLKGNHFTLRLTGLAQADGLEARLQAIATQGVPNYYGEQRFGRGGNNLEAAKAMFAGKRIKDRNKRSLYLSAARSMLFNAIVSARIEQGLAHQLLAGDCVMLKGSHSIFSEEVLTPELAARLASGDVQLTASLWGRGRLASQGAAAEFEQAVLAPYAEWCDGLEKAGLDQDRRPLLLKPEQMSWLLDGEVLTLSFFLPAGAFATSVVRELMQAEEADHGFRNQSDANSGQ.

Asp78 serves as the catalytic Nucleophile. A TRUD domain is found at 153–299; that stretch reads GVPNYYGEQR…LDQDRRPLLL (147 aa).

Belongs to the pseudouridine synthase TruD family.

It catalyses the reaction uridine(13) in tRNA = pseudouridine(13) in tRNA. Its function is as follows. Responsible for synthesis of pseudouridine from uracil-13 in transfer RNAs. This is tRNA pseudouridine synthase D from Aeromonas salmonicida (strain A449).